The primary structure comprises 376 residues: Carbamoyl phosphate synthase small chain (376 aa).

The interval 1 to 183 (MSKAVLVLED…PDGPPGVSRF (183 aa)) is CPSase. The L-glutamine site is built by serine 46, glycine 232, and glycine 234. The Glutamine amidotransferase type-1 domain maps to 184-376 (TVAALDLGIK…FVELMAGEGR (193 aa)). The Nucleophile role is filled by cysteine 260. The L-glutamine site is built by phenylalanine 261, glutamine 264, asparagine 302, glycine 304, and phenylalanine 305. Catalysis depends on residues histidine 350 and glutamate 352.

This sequence belongs to the CarA family. As to quaternary structure, composed of two chains; the small (or glutamine) chain promotes the hydrolysis of glutamine to ammonia, which is used by the large (or ammonia) chain to synthesize carbamoyl phosphate. Tetramer of heterodimers (alpha,beta)4.

The catalysed reaction is hydrogencarbonate + L-glutamine + 2 ATP + H2O = carbamoyl phosphate + L-glutamate + 2 ADP + phosphate + 2 H(+). It catalyses the reaction L-glutamine + H2O = L-glutamate + NH4(+). Its pathway is amino-acid biosynthesis; L-arginine biosynthesis; carbamoyl phosphate from bicarbonate: step 1/1. It participates in pyrimidine metabolism; UMP biosynthesis via de novo pathway; (S)-dihydroorotate from bicarbonate: step 1/3. In terms of biological role, small subunit of the glutamine-dependent carbamoyl phosphate synthetase (CPSase). CPSase catalyzes the formation of carbamoyl phosphate from the ammonia moiety of glutamine, carbonate, and phosphate donated by ATP, constituting the first step of 2 biosynthetic pathways, one leading to arginine and/or urea and the other to pyrimidine nucleotides. The small subunit (glutamine amidotransferase) binds and cleaves glutamine to supply the large subunit with the substrate ammonia. This chain is Carbamoyl phosphate synthase small chain, found in Mycobacterium bovis (strain ATCC BAA-935 / AF2122/97).